The sequence spans 60 residues: Protein translocase subunit SecE (60 aa).

The Cytoplasmic segment spans residues 1–31 (MFARLIRYFQEARAELARVTWPTREQVVEGT). The chain crosses the membrane as a helical span at residues 32 to 52 (QAILLFTLAFMVILGLYDTVF). Topologically, residues 53-60 (RFLIGLLR) are extracellular.

Belongs to the SecE/SEC61-gamma family. In terms of assembly, component of the Sec protein translocase complex. Heterotrimer consisting of SecY, SecE and SecG subunits. The heterotrimers can form oligomers, although 1 heterotrimer is thought to be able to translocate proteins. Interacts with SecDF, and other proteins may be involved. The channel interacts with SecA via subunit SecY.

The protein resides in the cell inner membrane. Functionally, essential subunit of the protein translocation channel SecYEG. Clamps together the 2 halves of SecY. May contact the channel plug during translocation. The sequence is that of Protein translocase subunit SecE from Thermus thermophilus (strain ATCC 27634 / DSM 579 / HB8).